Here is a 422-residue protein sequence, read N- to C-terminus: Adenylosuccinate synthetase (422 aa).

GTP-binding positions include 11-17 (GDEGKGK) and 39-41 (GHT). Residue Asp12 is the Proton acceptor of the active site. Positions 12 and 39 each coordinate Mg(2+). IMP-binding positions include 12 to 15 (DEGK), 37 to 40 (NAGH), Thr129, Arg143, Asn219, Thr234, and Arg298. Residue His40 is the Proton donor of the active site. 294 to 300 (VTTGRRR) contributes to the substrate binding site. GTP contacts are provided by residues Arg300, 326-328 (KLD), and 409-411 (GTG).

This sequence belongs to the adenylosuccinate synthetase family. Homodimer. Mg(2+) serves as cofactor.

Its subcellular location is the cytoplasm. It catalyses the reaction IMP + L-aspartate + GTP = N(6)-(1,2-dicarboxyethyl)-AMP + GDP + phosphate + 2 H(+). The protein operates within purine metabolism; AMP biosynthesis via de novo pathway; AMP from IMP: step 1/2. Plays an important role in the de novo pathway and in the salvage pathway of purine nucleotide biosynthesis. Catalyzes the first committed step in the biosynthesis of AMP from IMP. The chain is Adenylosuccinate synthetase from Ajellomyces capsulatus (strain H143) (Darling's disease fungus).